The following is a 416-amino-acid chain: Glutamyl-tRNA reductase (416 aa).

Substrate contacts are provided by residues 50–53 (TCNR), S109, 114–116 (EPQ), and Q120. The active-site Nucleophile is C51. 189–194 (GAGEMI) is a binding site for NADP(+).

Belongs to the glutamyl-tRNA reductase family. Homodimer.

It catalyses the reaction (S)-4-amino-5-oxopentanoate + tRNA(Glu) + NADP(+) = L-glutamyl-tRNA(Glu) + NADPH + H(+). Its pathway is porphyrin-containing compound metabolism; protoporphyrin-IX biosynthesis; 5-aminolevulinate from L-glutamyl-tRNA(Glu): step 1/2. In terms of biological role, catalyzes the NADPH-dependent reduction of glutamyl-tRNA(Glu) to glutamate 1-semialdehyde (GSA). This is Glutamyl-tRNA reductase from Vesicomyosocius okutanii subsp. Calyptogena okutanii (strain HA).